Here is a 287-residue protein sequence, read N- to C-terminus: Hydroxysteroid 11-beta-dehydrogenase 1-like protein (287 aa).

The signal sequence occupies residues 1–15 (MKVLLLTGLGALFFA). NADP(+)-binding positions include 36–62 (GVSAGIGEELAYHYARLGSHLVLTAHT), 87–88 (DM), and 114–116 (NHL). Ser-165 serves as a coordination point for substrate. The Proton acceptor role is filled by Tyr-178. Residues 178 to 182 (YSAAK) and 211 to 217 (GLRDRAS) each bind NADP(+). Residue Asn-280 is glycosylated (N-linked (GlcNAc...) asparagine).

The protein belongs to the short-chain dehydrogenases/reductases (SDR) family.

It is found in the secreted. The enzyme catalyses cortisone + NADPH + H(+) = cortisol + NADP(+). Functionally, unidirectional NADP(+)-dependent cortisol dehydrogenase (in vitro). The chain is Hydroxysteroid 11-beta-dehydrogenase 1-like protein (HSD11B1L) from Bos taurus (Bovine).